Consider the following 453-residue polypeptide: Bifunctional protein GlmU (453 aa).

A pyrophosphorylase region spans residues 1 to 225 (MNIVILAAGT…EWETLGVNSK (225 aa)). Residues 6 to 9 (LAAG), Lys20, Gln71, 76 to 77 (GT), 98 to 100 (YGD), Gly135, Glu150, Asn165, and Asn223 each bind UDP-N-acetyl-alpha-D-glucosamine. Position 100 (Asp100) interacts with Mg(2+). Asn223 lines the Mg(2+) pocket. Positions 226-246 (AQLAELERIHQRNIAEALLVD) are linker. Positions 247-453 (GVTLADPARL…GYVRPVKKKS (207 aa)) are N-acetyltransferase. Positions 329 and 347 each coordinate UDP-N-acetyl-alpha-D-glucosamine. His359 serves as the catalytic Proton acceptor. Positions 362 and 373 each coordinate UDP-N-acetyl-alpha-D-glucosamine. Acetyl-CoA-binding positions include Ala376, 382–383 (NY), Ser401, and Ala419.

This sequence in the N-terminal section; belongs to the N-acetylglucosamine-1-phosphate uridyltransferase family. In the C-terminal section; belongs to the transferase hexapeptide repeat family. In terms of assembly, homotrimer. Mg(2+) is required as a cofactor.

It localises to the cytoplasm. The catalysed reaction is alpha-D-glucosamine 1-phosphate + acetyl-CoA = N-acetyl-alpha-D-glucosamine 1-phosphate + CoA + H(+). It carries out the reaction N-acetyl-alpha-D-glucosamine 1-phosphate + UTP + H(+) = UDP-N-acetyl-alpha-D-glucosamine + diphosphate. The protein operates within nucleotide-sugar biosynthesis; UDP-N-acetyl-alpha-D-glucosamine biosynthesis; N-acetyl-alpha-D-glucosamine 1-phosphate from alpha-D-glucosamine 6-phosphate (route II): step 2/2. It participates in nucleotide-sugar biosynthesis; UDP-N-acetyl-alpha-D-glucosamine biosynthesis; UDP-N-acetyl-alpha-D-glucosamine from N-acetyl-alpha-D-glucosamine 1-phosphate: step 1/1. Its pathway is bacterial outer membrane biogenesis; LPS lipid A biosynthesis. In terms of biological role, catalyzes the last two sequential reactions in the de novo biosynthetic pathway for UDP-N-acetylglucosamine (UDP-GlcNAc). The C-terminal domain catalyzes the transfer of acetyl group from acetyl coenzyme A to glucosamine-1-phosphate (GlcN-1-P) to produce N-acetylglucosamine-1-phosphate (GlcNAc-1-P), which is converted into UDP-GlcNAc by the transfer of uridine 5-monophosphate (from uridine 5-triphosphate), a reaction catalyzed by the N-terminal domain. The chain is Bifunctional protein GlmU from Burkholderia lata (strain ATCC 17760 / DSM 23089 / LMG 22485 / NCIMB 9086 / R18194 / 383).